The chain runs to 132 residues: EF-hand calcium-binding domain-containing protein 10 (132 aa).

2 EF-hand domains span residues 64–99 (MDNS…LGLC) and 120–132 (EMNK…WSMF).

This chain is EF-hand calcium-binding domain-containing protein 10 (Efcab10), found in Mus musculus (Mouse).